Reading from the N-terminus, the 230-residue chain is MPLPDTMFCAQQIHIPPELPDILKQFTKAAIRTQPADVLQWSAGYFSALSRGDPLPVKDRMEMPTATQKTDTGLTPGLLKVLHKQCHHKQYVELTDLEQKWKNLCLPKEKFKALLQLDPCENRIKWINFLALGCSMLGGSLNTALKHLCEILTDDPEGGPARIPFKTFSYVYRYLANLDSDVSSSETESYLASLKENIDTRRNGMIGLSDFFFPKRNLLENRENSEDVGH.

In terms of domain architecture, RIIa spans 17–54 (PELPDILKQFTKAAIRTQPADVLQWSAGYFSALSRGDP).

The protein belongs to the ropporin family. As to quaternary structure, component of the axonemal radial spoke complex 1 (RS1), at least composed of spoke head proteins RSPH1, RSPH3, RSPH9 and the cilia-specific component RSPH4A or sperm-specific component RSPH6A, spoke stalk proteins RSPH14, DNAJB13, DYDC1, ROPN1L and NME5, and the anchor protein IQUB. May interact with AKAP3. Interacts with FSCB; the interaction increases upon spermatozoa capacitation conditions. Interacts with CFAP61. Post-translationally, sumoylated, sumoylation decreases upon spermatozoa capacitation conditions.

It localises to the cell projection. It is found in the cilium. The protein resides in the flagellum. Functionally, functions as part of axonemal radial spoke complexes that play an important part in the motility of sperm and cilia. Important for male fertility. With ROPN1, involved in fibrous sheath integrity and sperm motility, plays a role in PKA-dependent signaling processes required for spermatozoa capacitation. The protein is Ropporin-1-like protein (ROPN1L) of Macaca fascicularis (Crab-eating macaque).